Consider the following 163-residue polypeptide: Nucleotide-binding protein SACE_6882 (163 aa).

It belongs to the YajQ family.

Functionally, nucleotide-binding protein. This is Nucleotide-binding protein SACE_6882 from Saccharopolyspora erythraea (strain ATCC 11635 / DSM 40517 / JCM 4748 / NBRC 13426 / NCIMB 8594 / NRRL 2338).